Here is a 300-residue protein sequence, read N- to C-terminus: ETS homologous factor (300 aa).

The 87-residue stretch at 29 to 115 (STCNVSSGFF…SNLQHLKWNG (87 aa)) folds into the PNT domain. The tract at residues 179–204 (LPIAESPDTKKEQDHPTKPHTKKHNP) is disordered. Over residues 185-195 (PDTKKEQDHPT) the composition is skewed to basic and acidic residues. A DNA-binding region (ETS) is located at residues 207-289 (THLWEFIRDI…DGRRLVYKFG (83 aa)).

It belongs to the ETS family.

The protein localises to the nucleus. Functionally, transcriptional activator that may play a role in regulating epithelial cell differentiation and proliferation. May act as a repressor for a specific subset of ETS/AP-1-responsive genes, and as a modulator of the nuclear response to mitogen-activated protein kinase signaling cascades. Binds to DNA sequences containing the consensus nucleotide core sequence GGAA. Involved in regulation of TNFRSF10B/DR5 expression through Ets-binding sequences on the TNFRSF10B/DR5 promoter. In Bos taurus (Bovine), this protein is ETS homologous factor (EHF).